Consider the following 232-residue polypeptide: Large ribosomal subunit protein uL1 (232 aa).

It belongs to the universal ribosomal protein uL1 family. As to quaternary structure, part of the 50S ribosomal subunit.

Its function is as follows. Binds directly to 23S rRNA. The L1 stalk is quite mobile in the ribosome, and is involved in E site tRNA release. Functionally, protein L1 is also a translational repressor protein, it controls the translation of the L11 operon by binding to its mRNA. This is Large ribosomal subunit protein uL1 from Phocaeicola vulgatus (strain ATCC 8482 / DSM 1447 / JCM 5826 / CCUG 4940 / NBRC 14291 / NCTC 11154) (Bacteroides vulgatus).